The chain runs to 373 residues: Pectin lyase D (373 aa).

The first 19 residues, 1–19 (MKYAAALTAIAALAARAAA), serve as a signal peptide directing secretion. Intrachain disulfides connect cysteine 82–cysteine 101 and cysteine 91–cysteine 225. Residue asparagine 128 is glycosylated (N-linked (GlcNAc...) asparagine). The active site involves arginine 255. An N-linked (GlcNAc...) asparagine glycan is attached at asparagine 274. The cysteines at positions 321 and 329 are disulfide-linked. A glycan (N-linked (GlcNAc...) asparagine) is linked at asparagine 348. A compositionally biased stretch (low complexity) spans 354-366 (LPSADAASTSPAS). Residues 354-373 (LPSADAASTSPASNAGQGNL) form a disordered region.

Belongs to the polysaccharide lyase 1 family. Post-translationally, may be O-glycosylated; does not contain N-acetylglucosamine.

It localises to the secreted. The catalysed reaction is Eliminative cleavage of (1-&gt;4)-alpha-D-galacturonan methyl ester to give oligosaccharides with 4-deoxy-6-O-methyl-alpha-D-galact-4-enuronosyl groups at their non-reducing ends.. In terms of biological role, pectinolytic enzymes consist of four classes of enzymes: pectin lyase, polygalacturonase, pectin methylesterase and rhamnogalacturonase. Among pectinolytic enzymes, pectin lyase is the most important in depolymerization of pectin, since it cleaves internal glycosidic bonds of highly methylated pectins. In Aspergillus niger, this protein is Pectin lyase D (pelD).